We begin with the raw amino-acid sequence, 276 residues long: MGKLKLLNTIAPAYFYAATVVTFALHFLLFTPTIFQSSDVTINPAMLAHISIFLFLMGNALGNYIMTIRNPSESANETVIPVCSPDCPDRIDAHYLLNGRHFCKVCKKVILKRDHHCFFTGNCIGNRNMRYFIMFSIYTSSSCLYSLVIGVAYLTIEYSISFENPLTFLTLLPLSTGYFFLGLISGLQFFLVIMLYIWLGIGLVSVGFCCQQLLLVARGQTWCELQKGQLSECRGTWRANLTDVFGSHWVLGLFVPVPTVETVPGNWQVYHDHKHD.

The Cytoplasmic portion of the chain corresponds to 1–9 (MGKLKLLNT). The helical transmembrane segment at 10–30 (IAPAYFYAATVVTFALHFLLF) threads the bilayer. The Lumenal segment spans residues 31 to 45 (TPTIFQSSDVTINPA). Residues 46-66 (MLAHISIFLFLMGNALGNYIM) traverse the membrane as a helical segment. The Cytoplasmic segment spans residues 67–131 (TIRNPSESAN…NCIGNRNMRY (65 aa)). Residues 101–137 (HFCKVCKKVILKRDHHCFFTGNCIGNRNMRYFIMFSI) form the DHHC domain. C117 (S-palmitoyl cysteine intermediate) is an active-site residue. A helical transmembrane segment spans residues 132-152 (FIMFSIYTSSSCLYSLVIGVA). Over 153 to 165 (YLTIEYSISFENP) the chain is Lumenal. The chain crosses the membrane as a helical span at residues 166-186 (LTFLTLLPLSTGYFFLGLISG). The Cytoplasmic segment spans residues 187–188 (LQ). Residues 189–209 (FFLVIMLYIWLGIGLVSVGFC) traverse the membrane as a helical segment. At 210-276 (CQQLLLVARG…WQVYHDHKHD (67 aa)) the chain is on the lumenal side.

Belongs to the DHHC palmitoyltransferase family.

It localises to the endoplasmic reticulum membrane. The protein resides in the golgi apparatus membrane. The catalysed reaction is L-cysteinyl-[protein] + hexadecanoyl-CoA = S-hexadecanoyl-L-cysteinyl-[protein] + CoA. In terms of biological role, palmitoyltransferase that could catalyze the addition of palmitate onto various protein substrates and be involved in a variety of cellular processes. This chain is Palmitoyltransferase ZDHHC22 (zdhhc22), found in Danio rerio (Zebrafish).